A 224-amino-acid polypeptide reads, in one-letter code: MILCIGDVLSLAELQQILSLIADAEFVDGALTAGWNARLVKNNRQMPKGSLQQRKIEEIILAALERNLLFQMAARPKLIHSILISCYEAGMSYGTHTDDALMLDRHQLMRTDISFTLFLSAPEDYDGGELKIESSEGEQAYKLPAGALILYPASTLHRVEPVTRGIRYAAVSWVQSLIRDPQEREILFDLQTVRQQMFQESGKTRHFDLISKVYANLLRKWAEL.

One can recognise a Fe2OG dioxygenase domain in the interval 78-176 (LIHSILISCY…RYAAVSWVQS (99 aa)). His-96, Asp-98, and His-157 together coordinate Fe cation. 2-oxoglutarate is bound at residue Arg-167.

The cofactor is Fe(2+). L-ascorbate is required as a cofactor.

This is PKHD-type hydroxylase CYB_2270 from Synechococcus sp. (strain JA-2-3B'a(2-13)) (Cyanobacteria bacterium Yellowstone B-Prime).